A 103-amino-acid polypeptide reads, in one-letter code: Integration host factor subunit beta (103 aa).

The segment at 59-82 (RLGRNPKTGESVALPGKHVPHFKP) is disordered.

This sequence belongs to the bacterial histone-like protein family. As to quaternary structure, heterodimer of an alpha and a beta chain.

Functionally, this protein is one of the two subunits of integration host factor, a specific DNA-binding protein that functions in genetic recombination as well as in transcriptional and translational control. This chain is Integration host factor subunit beta, found in Xanthomonas oryzae pv. oryzae (strain MAFF 311018).